We begin with the raw amino-acid sequence, 305 residues long: Aquaporin-1 (305 aa).

A disordered region spans residues 1-34; the sequence is MSSNDSNDTDKQHTRLDPTGVDDAYIPPEQPETK. Residues 1–48 lie on the Cytoplasmic side of the membrane; that stretch reads MSSNDSNDTDKQHTRLDPTGVDDAYIPPEQPETKHHRFKISRDTLRDH. The chain crosses the membrane as a helical span at residues 49–69; that stretch reads FIAAVGEFCGTFMFLWCAYVI. Over 70-91 the chain is Extracellular; it reads CNVANHDVALVAAPDGSHPGQL. The chain crosses the membrane as a helical span at residues 92-112; that stretch reads IMIAIGFGFSVMFSIWCFAGV. The Cytoplasmic portion of the chain corresponds to 113 to 136; the sequence is SGGALNPAMSLSLCLARAVSPTRC. The NPA 1 signature appears at 118–120; sequence NPA. The chain crosses the membrane as a helical span at residues 137–157; it reads VVMWVSQIVAGMAAGGAASAM. The Extracellular portion of the chain corresponds to 158-176; that stretch reads TPGEVLFANSLGLGCSRTR. A helical transmembrane segment spans residues 177 to 197; it reads GLFLEMFGTAILCLTVLMTAV. Residues 198 to 203 are Cytoplasmic-facing; it reads EKRETN. Residues 204-224 form a helical membrane-spanning segment; the sequence is FMAALPIGISLFIAHVALTAY. The Extracellular segment spans residues 225–248; the sequence is TGTGVNPARSLGAAVAARYFPHYH. An NPA 2 motif is present at residues 230-232; that stretch reads NPA. A helical membrane pass occupies residues 249–269; that stretch reads WIYWIGTLLGSILAWSVWQLL. Topologically, residues 270-305 are cytoplasmic; the sequence is QILDYTTYVTAEKAASTKEKAQKKGETSSSSAVAEV. The span at 286–295 shows a compositional bias: basic and acidic residues; sequence TKEKAQKKGE. The tract at residues 286-305 is disordered; the sequence is TKEKAQKKGETSSSSAVAEV. Over residues 296-305 the composition is skewed to polar residues; it reads TSSSSAVAEV.

It belongs to the MIP/aquaporin (TC 1.A.8) family.

The protein resides in the endoplasmic reticulum membrane. The protein localises to the cell membrane. In terms of biological role, water channel required to facilitate the transport of water across membranes. Involved in sporulation, freeze tolerance and osmotolerance. Is non-functional in most laboratory strains. This is Aquaporin-1 (AQY1) from Saccharomyces cerevisiae (strain ATCC 204508 / S288c) (Baker's yeast).